A 1264-amino-acid chain; its full sequence is Regulator of G-protein signaling 22 (1264 aa).

The interval 565–587 (EEFSLSQPPKSPNKSPEVKTATQ) is disordered. The segment covering 568 to 578 (SLSQPPKSPNK) has biased composition (polar residues). 2 RGS domains span residues 852 to 980 (KFSD…AARQ) and 1021 to 1145 (AFRK…TDEN). Positions 1142 to 1174 (TDENIMSVLERRQEYNKQKKKLAVLEDEKSGKD) form a coiled coil.

Interacts with GNA11, GNA12 and GNA13. In terms of tissue distribution, testis-specific. Expressed in Leydig cells and spermatogenic cells from the spermatogonia to spermatid stages (at protein level).

The protein localises to the cytoplasm. The protein resides in the nucleus. Inhibits signal transduction by increasing the GTPase activity of G protein alpha subunits thereby driving them into their inactive GDP-bound form. In Homo sapiens (Human), this protein is Regulator of G-protein signaling 22 (RGS22).